The following is a 409-amino-acid chain: Peptidase T (409 aa).

Histidine 78 provides a ligand contact to Zn(2+). Aspartate 80 is an active-site residue. Residue aspartate 141 participates in Zn(2+) binding. The Proton acceptor role is filled by glutamate 175. 3 residues coordinate Zn(2+): glutamate 176, aspartate 198, and histidine 380.

Belongs to the peptidase M20B family. The cofactor is Zn(2+).

Its subcellular location is the cytoplasm. The enzyme catalyses Release of the N-terminal residue from a tripeptide.. Its function is as follows. Cleaves the N-terminal amino acid of tripeptides. The chain is Peptidase T from Caldanaerobacter subterraneus subsp. tengcongensis (strain DSM 15242 / JCM 11007 / NBRC 100824 / MB4) (Thermoanaerobacter tengcongensis).